Consider the following 638-residue polypeptide: 1-deoxy-D-xylulose-5-phosphate synthase (638 aa).

Residues His72 and 113–115 (GHA) each bind thiamine diphosphate. Asp144 provides a ligand contact to Mg(2+). Residues 145–146 (GA), Asn174, Tyr287, and Glu370 contribute to the thiamine diphosphate site. Asn174 is a binding site for Mg(2+).

This sequence belongs to the transketolase family. DXPS subfamily. As to quaternary structure, homodimer. Mg(2+) is required as a cofactor. Thiamine diphosphate serves as cofactor.

The catalysed reaction is D-glyceraldehyde 3-phosphate + pyruvate + H(+) = 1-deoxy-D-xylulose 5-phosphate + CO2. The protein operates within metabolic intermediate biosynthesis; 1-deoxy-D-xylulose 5-phosphate biosynthesis; 1-deoxy-D-xylulose 5-phosphate from D-glyceraldehyde 3-phosphate and pyruvate: step 1/1. Catalyzes the acyloin condensation reaction between C atoms 2 and 3 of pyruvate and glyceraldehyde 3-phosphate to yield 1-deoxy-D-xylulose-5-phosphate (DXP). The polypeptide is 1-deoxy-D-xylulose-5-phosphate synthase (Thermosynechococcus vestitus (strain NIES-2133 / IAM M-273 / BP-1)).